We begin with the raw amino-acid sequence, 351 residues long: Anthranilate phosphoribosyltransferase (351 aa).

5-phospho-alpha-D-ribose 1-diphosphate is bound by residues glycine 80, 83–84, threonine 88, 90–93, 108–116, and serine 120; these read GD, NIST, and KHGNRSITS. Glycine 80 serves as a coordination point for anthranilate. Serine 92 contacts Mg(2+). Residue asparagine 111 participates in anthranilate binding. Arginine 166 lines the anthranilate pocket. Residues aspartate 229 and glutamate 230 each coordinate Mg(2+).

The protein belongs to the anthranilate phosphoribosyltransferase family. Homodimer. Mg(2+) serves as cofactor.

The enzyme catalyses N-(5-phospho-beta-D-ribosyl)anthranilate + diphosphate = 5-phospho-alpha-D-ribose 1-diphosphate + anthranilate. It functions in the pathway amino-acid biosynthesis; L-tryptophan biosynthesis; L-tryptophan from chorismate: step 2/5. Catalyzes the transfer of the phosphoribosyl group of 5-phosphorylribose-1-pyrophosphate (PRPP) to anthranilate to yield N-(5'-phosphoribosyl)-anthranilate (PRA). The chain is Anthranilate phosphoribosyltransferase from Chlorobaculum parvum (strain DSM 263 / NCIMB 8327) (Chlorobium vibrioforme subsp. thiosulfatophilum).